Here is a 545-residue protein sequence, read N- to C-terminus: Glucose-6-phosphate isomerase (545 aa).

E349 acts as the Proton donor in catalysis. Residues H380 and K509 contribute to the active site.

This sequence belongs to the GPI family.

It localises to the cytoplasm. It catalyses the reaction alpha-D-glucose 6-phosphate = beta-D-fructose 6-phosphate. Its pathway is carbohydrate biosynthesis; gluconeogenesis. The protein operates within carbohydrate degradation; glycolysis; D-glyceraldehyde 3-phosphate and glycerone phosphate from D-glucose: step 2/4. Its function is as follows. Catalyzes the reversible isomerization of glucose-6-phosphate to fructose-6-phosphate. This is Glucose-6-phosphate isomerase from Chelativorans sp. (strain BNC1).